A 754-amino-acid polypeptide reads, in one-letter code: Protein NUCLEOLAR FACTOR 1 (754 aa).

3 disordered regions span residues 1 to 56 (MAPN…EAMV), 69 to 166 (SLGS…ELST), and 390 to 413 (EDTD…QKSS). The span at 42 to 52 (SPEESSIEAES) shows a compositional bias: acidic residues. Positions 80–93 (MNKRRQREEEGKSD) are enriched in basic and acidic residues. Acidic residues-rich tracts occupy residues 94–110 (TEED…ENSG) and 138–161 (DTQE…DEEV). Positions 402 to 413 (SKNGNSIKQKSS) are enriched in polar residues.

The protein belongs to the UTP25 family. As to quaternary structure, component of the ribosomal small subunit (SSU) processome composed of at least 40 protein subunits and snoRNA U3. Interacts with THAL in the nucleus. In terms of tissue distribution, preferentially expressed in differentiating cells in young tissues such as floral buds, ovules, embryos, secondary roots, pollen, young seedlings and vascular bundles. Observed ubiquitously.

It is found in the nucleus. The protein resides in the nucleolus. DEAD-box RNA helicase-like protein required for pre-18S rRNA processing, specifically at sites A0, A1, and A2. Involved in the control of rRNA expression. Required for embryo development and female gametogenesis. In Arabidopsis thaliana (Mouse-ear cress), this protein is Protein NUCLEOLAR FACTOR 1.